Consider the following 650-residue polypeptide: 1-deoxy-D-xylulose-5-phosphate synthase (650 aa).

A compositionally biased stretch (basic and acidic residues) spans 1–13 (MSKIKNDKRETGH). Residues 1-23 (MSKIKNDKRETGHLKSPPETPLL) form a disordered region. Thiamine diphosphate is bound by residues histidine 92 and 133-135 (AHS). Aspartate 164 contributes to the Mg(2+) binding site. Thiamine diphosphate-binding positions include 165-166 (GA), asparagine 193, tyrosine 302, and glutamate 384. Asparagine 193 contributes to the Mg(2+) binding site.

It belongs to the transketolase family. DXPS subfamily. Homodimer. Mg(2+) is required as a cofactor. Thiamine diphosphate serves as cofactor.

The enzyme catalyses D-glyceraldehyde 3-phosphate + pyruvate + H(+) = 1-deoxy-D-xylulose 5-phosphate + CO2. It functions in the pathway metabolic intermediate biosynthesis; 1-deoxy-D-xylulose 5-phosphate biosynthesis; 1-deoxy-D-xylulose 5-phosphate from D-glyceraldehyde 3-phosphate and pyruvate: step 1/1. Functionally, catalyzes the acyloin condensation reaction between C atoms 2 and 3 of pyruvate and glyceraldehyde 3-phosphate to yield 1-deoxy-D-xylulose-5-phosphate (DXP). This Chelativorans sp. (strain BNC1) protein is 1-deoxy-D-xylulose-5-phosphate synthase.